The sequence spans 432 residues: 3-phosphoshikimate 1-carboxyvinyltransferase (432 aa).

3-phosphoshikimate contacts are provided by K23, S24, and R28. K23 lines the phosphoenolpyruvate pocket. Residues G95 and R123 each coordinate phosphoenolpyruvate. 3-phosphoshikimate-binding residues include S167, Q169, D317, and K344. Residue Q169 coordinates phosphoenolpyruvate. Residue D317 is the Proton acceptor of the active site. Residues R348 and R390 each coordinate phosphoenolpyruvate.

This sequence belongs to the EPSP synthase family. In terms of assembly, monomer.

Its subcellular location is the cytoplasm. The enzyme catalyses 3-phosphoshikimate + phosphoenolpyruvate = 5-O-(1-carboxyvinyl)-3-phosphoshikimate + phosphate. It functions in the pathway metabolic intermediate biosynthesis; chorismate biosynthesis; chorismate from D-erythrose 4-phosphate and phosphoenolpyruvate: step 6/7. Functionally, catalyzes the transfer of the enolpyruvyl moiety of phosphoenolpyruvate (PEP) to the 5-hydroxyl of shikimate-3-phosphate (S3P) to produce enolpyruvyl shikimate-3-phosphate and inorganic phosphate. This chain is 3-phosphoshikimate 1-carboxyvinyltransferase, found in Staphylococcus aureus (strain MRSA252).